The sequence spans 715 residues: Dynein axonemal intermediate chain 7 (715 aa).

Positions 291–322 (AVSKDLQEENKQENESNSVHEEETKAEGQGDV) are disordered. Residues 295 to 318 (DLQEENKQENESNSVHEEETKAEG) are compositionally biased toward basic and acidic residues.

The protein belongs to the DNAI7 family. Part of the multisubunit axonemal dynein complex formed at least of two heavy chains and a number of intermediate and light chains. Associates with tubulin. Interacts with microtubule. Post-translationally, ubiquitinated. Ubiquitination leads to its degradation through the 26S proteasome. Ubiquitin-proteasome-mediated DNAI7 degradation occurs in mitosis.

It localises to the cell projection. The protein localises to the cilium. The protein resides in the cytoplasm. Functionally, via its association with the multisubunit axonemal dynein complex, is potentially involved in the regulation of cilia function. May act as a cell cycle regulator. This is Dynein axonemal intermediate chain 7 from Bos taurus (Bovine).